The following is a 613-amino-acid chain: Laccase 1 (613 aa).

The signal sequence occupies residues 1–20; that stretch reads MSRFARLLLIVALFFTNAWA. 2 Plastocyanin-like domains span residues 29-142 and 171-359; these read ITWK…IRPK and YLVV…MRIP. Asparagine 74 is a glycosylation site (N-linked (GlcNAc...) asparagine). Residues histidine 78, histidine 80, histidine 122, and histidine 124 each coordinate Cu cation. N-linked (GlcNAc...) asparagine glycans are attached at residues asparagine 256, asparagine 279, asparagine 444, asparagine 468, and asparagine 484. Residues 468–598 enclose the Plastocyanin-like 3 domain; the sequence is NATRDTENDG…GGMGIAILDG (131 aa). Cu cation-binding residues include histidine 506, histidine 509, and histidine 511. An N-linked (GlcNAc...) asparagine glycan is attached at asparagine 526. Positions 580, 581, 582, and 586 each coordinate Cu cation.

Belongs to the multicopper oxidase family. The cofactor is Cu cation.

Its subcellular location is the cell surface. It participates in pigment biosynthesis. Functionally, laccase; part of the Pks1 gene cluster that mediates the biosynthesis of an anthraquinone derivative pigment that contributes to conidial pigmentation that provides protection from UV radiation, heat and cold stress. The polyketide synthase Pks1 produces 1-acetyl-2,4,6,8-tetrahydroxy-9,10-anthraquinone though condensation of acetyl-CoA with malonyl-CoA. The dehydratase EthD and the laccase Mlac1 further convert the anthraquinone derivative into the final conidial pigment. This Metarhizium robertsii (strain ARSEF 23 / ATCC MYA-3075) (Metarhizium anisopliae (strain ARSEF 23)) protein is Laccase 1.